The chain runs to 339 residues: MPNASEHSFPFPILIGDIGGTNARFALLTDAYGEPKQLAPIRTGDFATIEEAMQKGILDKTSVQPRSAILAVAGPIKGDEIPLTNAGWVIRPKDMLAGLGLEDVLVINDFEAQALAIAAPADQDVVQIGGGAVRPFHSRVVLGPGTGLGVAGLVYAQHTWIPVPGEGGHVDIGPRTERDFRIWPFLEPIEGRMAGEQILCGRGIMNLYRAVCAANGEEAVLADQAAVTTSALSGADAAAVETVSLFATYLGRVAGDMALIFMARGGVFLAGGISQKILPALTKPEFRAAFEDKAPHSALMRTIPTFAVIHPMAALSGLAAFARTPRDFGVAMEGRRWRR.

ATP is bound at residue 16-21; the sequence is GDIGGT.

This sequence belongs to the bacterial glucokinase family.

It localises to the cytoplasm. It catalyses the reaction D-glucose + ATP = D-glucose 6-phosphate + ADP + H(+). The protein is Glucokinase of Rhizobium meliloti (strain 1021) (Ensifer meliloti).